Consider the following 484-residue polypeptide: tRNA sulfurtransferase (484 aa).

A THUMP domain is found at 63–167 (REMIERLTCT…LDRLFVIHRQ (105 aa)). Residues 185 to 186 (LM), Lys267, Gly289, and Gln298 each bind ATP. Cysteines 346 and 457 form a disulfide. The Rhodanese domain maps to 405 to 483 (VLPGQIVIDI…GHTNVRVYRP (79 aa)). The active-site Cysteine persulfide intermediate is the Cys457.

The protein belongs to the ThiI family.

The protein localises to the cytoplasm. The enzyme catalyses [ThiI sulfur-carrier protein]-S-sulfanyl-L-cysteine + a uridine in tRNA + 2 reduced [2Fe-2S]-[ferredoxin] + ATP + H(+) = [ThiI sulfur-carrier protein]-L-cysteine + a 4-thiouridine in tRNA + 2 oxidized [2Fe-2S]-[ferredoxin] + AMP + diphosphate. It catalyses the reaction [ThiS sulfur-carrier protein]-C-terminal Gly-Gly-AMP + S-sulfanyl-L-cysteinyl-[cysteine desulfurase] + AH2 = [ThiS sulfur-carrier protein]-C-terminal-Gly-aminoethanethioate + L-cysteinyl-[cysteine desulfurase] + A + AMP + 2 H(+). It participates in cofactor biosynthesis; thiamine diphosphate biosynthesis. Its function is as follows. Catalyzes the ATP-dependent transfer of a sulfur to tRNA to produce 4-thiouridine in position 8 of tRNAs, which functions as a near-UV photosensor. Also catalyzes the transfer of sulfur to the sulfur carrier protein ThiS, forming ThiS-thiocarboxylate. This is a step in the synthesis of thiazole, in the thiamine biosynthesis pathway. The sulfur is donated as persulfide by IscS. This Pseudomonas paraeruginosa (strain DSM 24068 / PA7) (Pseudomonas aeruginosa (strain PA7)) protein is tRNA sulfurtransferase.